Here is a 61-residue protein sequence, read N- to C-terminus: DNA-directed RNA polymerase subunit 12-like protein (61 aa).

4 residues coordinate Zn(2+): cysteine 21, cysteine 24, cysteine 38, and cysteine 41.

The protein belongs to the archaeal Rpo12/eukaryotic RPC10 RNA polymerase subunit family.

Its subcellular location is the nucleus. The chain is DNA-directed RNA polymerase subunit 12-like protein (NRPB12L) from Arabidopsis thaliana (Mouse-ear cress).